We begin with the raw amino-acid sequence, 378 residues long: Beta-1,3-galactosyltransferase pvg3 (378 aa).

Residues 1 to 8 (MFSNSKKK) are Cytoplasmic-facing. The helical; Signal-anchor for type II membrane protein transmembrane segment at 9 to 29 (IFLYVLIAGVATFSFAFLVLN) threads the bilayer. At 30-378 (RLQAEEHSLA…ATIPLPSLDV (349 aa)) the chain is on the lumenal side. 4 N-linked (GlcNAc...) asparagine glycosylation sites follow: N53, N97, N180, and N354.

This sequence belongs to the glycosyltransferase 31 family.

The protein localises to the endoplasmic reticulum membrane. It is found in the golgi apparatus. Its subcellular location is the golgi stack membrane. The enzyme catalyses 3-O-(beta-D-galactosyl-(1-&gt;4)-beta-D-xylosyl)-L-seryl-[protein] + UDP-alpha-D-galactose = 3-O-(beta-D-galactosyl-(1-&gt;3)-beta-D-galactosyl-(1-&gt;4)-beta-D-xylosyl)-L-seryl-[protein] + UDP + H(+). Involved in cell wall biogenesis. Has a role in the addition of Gal-beta1,3 moeities to galactomannans and their subsequent pyruvylation. Has a role in meiosis. This Schizosaccharomyces pombe (strain 972 / ATCC 24843) (Fission yeast) protein is Beta-1,3-galactosyltransferase pvg3 (pvg3).